We begin with the raw amino-acid sequence, 102 residues long: Large ribosomal subunit protein bL21 (102 aa).

The protein belongs to the bacterial ribosomal protein bL21 family. Part of the 50S ribosomal subunit. Contacts protein L20.

Its function is as follows. This protein binds to 23S rRNA in the presence of protein L20. This Neisseria meningitidis serogroup A / serotype 4A (strain DSM 15465 / Z2491) protein is Large ribosomal subunit protein bL21.